Reading from the N-terminus, the 297-residue chain is Farnesyl diphosphate synthase (297 aa).

Positions 47, 50, and 79 each coordinate isopentenyl diphosphate. Aspartate 86 and aspartate 92 together coordinate Mg(2+). Arginine 97 is a (2E)-geranyl diphosphate binding site. Arginine 98 is an isopentenyl diphosphate binding site. (2E)-geranyl diphosphate is bound by residues lysine 183, threonine 184, glutamine 221, and lysine 238.

It belongs to the FPP/GGPP synthase family. It depends on Mg(2+) as a cofactor.

The protein resides in the cytoplasm. The catalysed reaction is isopentenyl diphosphate + (2E)-geranyl diphosphate = (2E,6E)-farnesyl diphosphate + diphosphate. This is Farnesyl diphosphate synthase from Geobacillus stearothermophilus (Bacillus stearothermophilus).